Reading from the N-terminus, the 155-residue chain is Small ribosomal subunit protein uS7 (155 aa).

It belongs to the universal ribosomal protein uS7 family. In terms of assembly, part of the 30S ribosomal subunit. Contacts proteins S9 and S11.

Functionally, one of the primary rRNA binding proteins, it binds directly to 16S rRNA where it nucleates assembly of the head domain of the 30S subunit. Is located at the subunit interface close to the decoding center, probably blocks exit of the E-site tRNA. In Mycoplasma genitalium (strain ATCC 33530 / DSM 19775 / NCTC 10195 / G37) (Mycoplasmoides genitalium), this protein is Small ribosomal subunit protein uS7.